Reading from the N-terminus, the 697-residue chain is Potassium-transporting ATPase ATP-binding subunit (697 aa).

4 helical membrane passes run P55 to S75, G82 to A102, L245 to F265, and V271 to I291. Catalysis depends on D324, which acts as the 4-aspartylphosphate intermediate. ATP is bound by residues D361, E365, F393–S400, and K412. Residues D535 and D539 each contribute to the Mg(2+) site. 3 consecutive transmembrane segments (helical) span residues F605–M625, A633–M653, and G677–I697.

It belongs to the cation transport ATPase (P-type) (TC 3.A.3) family. Type IA subfamily. As to quaternary structure, the system is composed of three essential subunits: KdpA, KdpB and KdpC.

The protein localises to the cell membrane. The enzyme catalyses K(+)(out) + ATP + H2O = K(+)(in) + ADP + phosphate + H(+). Part of the high-affinity ATP-driven potassium transport (or Kdp) system, which catalyzes the hydrolysis of ATP coupled with the electrogenic transport of potassium into the cytoplasm. This subunit is responsible for energy coupling to the transport system and for the release of the potassium ions to the cytoplasm. This Bacillus mycoides (strain KBAB4) (Bacillus weihenstephanensis) protein is Potassium-transporting ATPase ATP-binding subunit.